A 181-amino-acid polypeptide reads, in one-letter code: MRGGKKGQQTAQKNRINEEITAQEVRLIDIDGEQAGIQSLKDAQTMADAAGVDLVEISPNAEPPVCRIMDYGKFIFEKSKELKEQKKKQKQIQIKEIKFRPGTDEGDYQVKLRNLRKFLEAGDKAKITIRFRGREMAHQEIGIELLNRIKGDLEELAVVESFPNRVEGRQMVMMMAPVAKK.

Belongs to the IF-3 family. Monomer.

Its subcellular location is the cytoplasm. In terms of biological role, IF-3 binds to the 30S ribosomal subunit and shifts the equilibrium between 70S ribosomes and their 50S and 30S subunits in favor of the free subunits, thus enhancing the availability of 30S subunits on which protein synthesis initiation begins. The chain is Translation initiation factor IF-3 from Pseudoalteromonas translucida (strain TAC 125).